We begin with the raw amino-acid sequence, 236 residues long: Probable glutathione S-transferase BZ2 (236 aa).

The region spanning 1–80 is the GST N-terminal domain; that stretch reads MRVLGGEVSP…YIEDVARESG (80 aa). Residues Ser-9, Lys-37, Ile-51, and 64 to 65 each bind glutathione; that span reads ES. The GST C-terminal domain maps to 92 to 221; it reads DPYERAMHRF…LPDTEKVVQF (130 aa).

This sequence belongs to the GST superfamily. HSP26 family.

It catalyses the reaction RX + glutathione = an S-substituted glutathione + a halide anion + H(+). It participates in pigment biosynthesis; anthocyanin biosynthesis. This is Probable glutathione S-transferase BZ2 (BZ2) from Zea mays (Maize).